The following is a 1811-amino-acid chain: ADP-ribosylation factor guanine nucleotide-exchange factor sec71 (1811 aa).

2 disordered regions span residues 1–108 and 316–336; these read MTDL…TSEA and INMNKSSSNGTPDRANSPIPS. Basic and acidic residues-rich tracts occupy residues 33 to 49, 57 to 73, and 80 to 91; these read STIKSRVSDEIDEHDSI, KSIEINDKNLEAEKDIE, and PPEDDLDSRSIE. Ser-40 bears the Phosphoserine mark. Polar residues-rich tracts occupy residues 92–108 and 316–326; these read SEQTGTLSKQTTSTSEA and INMNKSSSNGT. Position 326 is a phosphothreonine (Thr-326). 2 positions are modified to phosphoserine: Ser-332 and Ser-353. The HUS box signature appears at 533–537; that stretch reads NYDCI. Positions 643–663 are enriched in basic and acidic residues; the sequence is TAKDDETESTSKGEEPQKSKS. The tract at residues 643-688 is disordered; sequence TAKDDETESTSKGEEPQKSKSEPPSAGINSTSMDNLESSGQALATD. The segment covering 669 to 688 has biased composition (polar residues); that stretch reads GINSTSMDNLESSGQALATD. In terms of domain architecture, SEC7 spans 692-880; the sequence is QFENLKHRKK…TEVYEEIQKN (189 aa). A Phosphoserine modification is found at Ser-741. Thr-742 carries the post-translational modification Phosphothreonine. Asp-812 lines the Mg(2+) pocket. An HDS1 domain region spans residues 889 to 1103; that stretch reads DPTSNFPEIP…TTKPLRKSLD (215 aa).

The protein resides in the cytoplasm. It is found in the golgi apparatus. It localises to the trans-Golgi network. Its subcellular location is the cytoplasmic vesicle. The protein localises to the COPI-coated vesicle membrane. The protein resides in the COPII-coated vesicle membrane. Functionally, guanine exchange factor that acts as an activator of arf1 at the trans-Golgi net-work and is thus involved in vesicular budding and traffic between compartments of the Golgi apparatus. Activation of Arf (ADP-ribosylation factor) GTPases is essential for vesicle formation via recruitment of cargo adapters and coat proteins necessary for Golgi trafficking. Involved in tunicamycin-induced ER stress response and subsequent apoptosis. In Schizosaccharomyces pombe (strain 972 / ATCC 24843) (Fission yeast), this protein is ADP-ribosylation factor guanine nucleotide-exchange factor sec71.